Here is a 464-residue protein sequence, read N- to C-terminus: V-type ATP synthase beta chain (464 aa).

This sequence belongs to the ATPase alpha/beta chains family.

In terms of biological role, produces ATP from ADP in the presence of a proton gradient across the membrane. The V-type beta chain is a regulatory subunit. The sequence is that of V-type ATP synthase beta chain from Streptococcus gordonii (strain Challis / ATCC 35105 / BCRC 15272 / CH1 / DL1 / V288).